The following is a 359-amino-acid chain: Phospho-N-acetylmuramoyl-pentapeptide-transferase (359 aa).

10 helical membrane-spanning segments follow: residues 3-23, 55-75, 80-100, 117-137, 156-176, 187-207, 231-251, 255-275, 280-300, and 334-354; these read QIMI…PALI, VAIL…GLAF, ITAS…VGFL, TAKT…VLQF, IATV…VVSA, LDGL…LITF, LALI…WNAA, IFMG…LSVT, ILAV…VLQI, and FWLL…GEWL.

It belongs to the glycosyltransferase 4 family. MraY subfamily. The cofactor is Mg(2+).

The protein resides in the cell inner membrane. It catalyses the reaction UDP-N-acetyl-alpha-D-muramoyl-L-alanyl-gamma-D-glutamyl-meso-2,6-diaminopimeloyl-D-alanyl-D-alanine + di-trans,octa-cis-undecaprenyl phosphate = di-trans,octa-cis-undecaprenyl diphospho-N-acetyl-alpha-D-muramoyl-L-alanyl-D-glutamyl-meso-2,6-diaminopimeloyl-D-alanyl-D-alanine + UMP. The protein operates within cell wall biogenesis; peptidoglycan biosynthesis. Functionally, catalyzes the initial step of the lipid cycle reactions in the biosynthesis of the cell wall peptidoglycan: transfers peptidoglycan precursor phospho-MurNAc-pentapeptide from UDP-MurNAc-pentapeptide onto the lipid carrier undecaprenyl phosphate, yielding undecaprenyl-pyrophosphoryl-MurNAc-pentapeptide, known as lipid I. The sequence is that of Phospho-N-acetylmuramoyl-pentapeptide-transferase from Mycobacterium marinum (strain ATCC BAA-535 / M).